The following is a 459-amino-acid chain: Argininosuccinate lyase (459 aa).

It belongs to the lyase 1 family. Argininosuccinate lyase subfamily.

The protein resides in the cytoplasm. The catalysed reaction is 2-(N(omega)-L-arginino)succinate = fumarate + L-arginine. The protein operates within amino-acid biosynthesis; L-arginine biosynthesis; L-arginine from L-ornithine and carbamoyl phosphate: step 3/3. The chain is Argininosuccinate lyase from Methylobacterium radiotolerans (strain ATCC 27329 / DSM 1819 / JCM 2831 / NBRC 15690 / NCIMB 10815 / 0-1).